Here is a 60-residue protein sequence, read N- to C-terminus: MDPCDCSKSGTCNCGGSCTCTNCSCTSCKKSCCPCCPSGCTKCASGCVCKGKTCDTSCCQ.

The interval 1-28 is beta; the sequence is MDPCDCSKSGTCNCGGSCTCTNCSCTSC. Residues C4, C6, C12, C14, C18, C20, C23, C25, C28, C32, C33, C35, C36, C40, C43, C47, C49, C54, C58, and C59 each contribute to the a divalent metal cation site. An alpha region spans residues 29 to 60; sequence KKSCCPCCPSGCTKCASGCVCKGKTCDTSCCQ.

Belongs to the metallothionein superfamily. Type 1 family.

In terms of biological role, metallothioneins have a high content of cysteine residues that bind various heavy metals. The chain is Metallothionein B (mtb) from Chionodraco hamatus (Antarctic teleost icefish).